The chain runs to 229 residues: Cytidylate kinase (229 aa).

12 to 20 (GPSGAGKGT) is a binding site for ATP.

It belongs to the cytidylate kinase family. Type 1 subfamily.

It is found in the cytoplasm. It carries out the reaction CMP + ATP = CDP + ADP. The catalysed reaction is dCMP + ATP = dCDP + ADP. The protein is Cytidylate kinase of Shewanella frigidimarina (strain NCIMB 400).